Here is a 185-residue protein sequence, read N- to C-terminus: Elongation factor P (185 aa).

Belongs to the elongation factor P family.

The protein localises to the cytoplasm. Its pathway is protein biosynthesis; polypeptide chain elongation. Its function is as follows. Involved in peptide bond synthesis. Stimulates efficient translation and peptide-bond synthesis on native or reconstituted 70S ribosomes in vitro. Probably functions indirectly by altering the affinity of the ribosome for aminoacyl-tRNA, thus increasing their reactivity as acceptors for peptidyl transferase. The protein is Elongation factor P of Rippkaea orientalis (strain PCC 8801 / RF-1) (Cyanothece sp. (strain PCC 8801)).